The chain runs to 61 residues: Sperm protamine P1 (61 aa).

The disordered stretch occupies residues Met1–Asn61.

This sequence belongs to the protamine P1 family. In terms of tissue distribution, testis.

It localises to the nucleus. The protein localises to the chromosome. Protamines substitute for histones in the chromatin of sperm during the haploid phase of spermatogenesis. They compact sperm DNA into a highly condensed, stable and inactive complex. The chain is Sperm protamine P1 (PRM1) from Ornithorhynchus anatinus (Duckbill platypus).